We begin with the raw amino-acid sequence, 516 residues long: D-aminopeptidase (516 aa).

Serine 61 serves as the catalytic Nucleophile. The Proton donor/acceptor role is filled by lysine 64. An important for specificity region spans residues 476-486 (RRSMDAPAPGD). Position 480 (aspartate 480) interacts with substrate.

The protein belongs to the peptidase S12 family. In terms of assembly, homodimer.

The catalysed reaction is Release of an N-terminal D-amino acid from a peptide, Xaa-|-Yaa-, in which Xaa is preferably D-Ala, D-Ser or D-Thr. D-amino acid amides and methyl esters also are hydrolyzed, as is glycine amide.. Its activity is regulated as follows. Inhibited by beta-lactam compounds such as 6-aminopenicillic acid, 7-aminocephalosporanic acid, benzylpenicillin and ampicillin. Inhibited by p-chloromercuribenzoate. Hydrolyzes N-terminal residues in D-amino acid-containing peptides. The chain is D-aminopeptidase from Cereibacter sphaeroides (strain ATCC 17023 / DSM 158 / JCM 6121 / CCUG 31486 / LMG 2827 / NBRC 12203 / NCIMB 8253 / ATH 2.4.1.) (Rhodobacter sphaeroides).